Reading from the N-terminus, the 116-residue chain is Large ribosomal subunit protein bL17 (116 aa).

The protein belongs to the bacterial ribosomal protein bL17 family. Part of the 50S ribosomal subunit. Contacts protein L32.

The polypeptide is Large ribosomal subunit protein bL17 (Acaryochloris marina (strain MBIC 11017)).